We begin with the raw amino-acid sequence, 343 residues long: Anthranilate phosphoribosyltransferase (343 aa).

5-phospho-alpha-D-ribose 1-diphosphate-binding positions include Gly79, 82-83 (GD), Thr87, 89-92 (NVST), 106-114 (KHGNRAASS), and Ser118. Residue Gly79 participates in anthranilate binding. Residue Ser91 coordinates Mg(2+). Asn109 serves as a coordination point for anthranilate. Arg164 contributes to the anthranilate binding site. Positions 223 and 224 each coordinate Mg(2+).

It belongs to the anthranilate phosphoribosyltransferase family. As to quaternary structure, homodimer. Mg(2+) is required as a cofactor.

The enzyme catalyses N-(5-phospho-beta-D-ribosyl)anthranilate + diphosphate = 5-phospho-alpha-D-ribose 1-diphosphate + anthranilate. It functions in the pathway amino-acid biosynthesis; L-tryptophan biosynthesis; L-tryptophan from chorismate: step 2/5. Its function is as follows. Catalyzes the transfer of the phosphoribosyl group of 5-phosphorylribose-1-pyrophosphate (PRPP) to anthranilate to yield N-(5'-phosphoribosyl)-anthranilate (PRA). The polypeptide is Anthranilate phosphoribosyltransferase (Metallosphaera sedula (strain ATCC 51363 / DSM 5348 / JCM 9185 / NBRC 15509 / TH2)).